The sequence spans 329 residues: Oxidoreductase sirO (329 aa).

Asp54 contacts NADP(+). Residue Tyr59 is the Proton donor of the active site. His118 lines the substrate pocket. NADP(+) contacts are provided by residues 148–149 (SN), Gln174, 203–213 (SPLCCGLLINA), and 288–296 (SSARQLEES).

Belongs to the aldo/keto reductase family. Aldo/keto reductase 2 subfamily.

It functions in the pathway mycotoxin biosynthesis. In terms of biological role, oxidoreductase; part of the gene cluster that mediates the biosynthesis of sirodesmin PL, an epipolythiodioxopiperazine (ETP) characterized by a disulfide bridged cyclic dipeptide and that acts as a phytotoxin which is involved in the blackleg didease of canola. SirD catalyzes the O-prenylation of L-tyrosine (L-Tyr) in the presence of dimethylallyl diphosphate (DMAPP) to yield 4-O-dimethylallyl-L-Tyr, and therefore represents probably the first pathway-specific enzyme in the biosynthesis of sirodesmin PL. 4-O-dimethylallyl-L-Tyr, then undergoes condensation with L-Ser in a reaction catalyzed by the non-ribosomal peptide synthase sirP to form the diketopiperazine (DKP) backbone. Further bishydroxylation of the DKP performed by the cytochrome P450 monooxygenase sirC leads to the production of the intermediate phomamide. This step is essential to form the reactive thiol group required for toxicity of sirodesmin PL. The next steps of sirodesmin biosynthesis are not well understood yet, but some predictions could be made from intermediate compounds identification. Phomamide is converted into phomalizarine via oxidation, probably by sirT. Further oxidation, methylation (by sirM or sirN) and reduction steps convert phomalizarine to deacetyl sirodesmin. Finally, acetyltransferase sirH probably acetylates deacetyl sirodesmin to produce sirodesmin PL. The chain is Oxidoreductase sirO from Leptosphaeria maculans (Blackleg fungus).